The chain runs to 309 residues: Ribonuclease Z (309 aa).

The Zn(2+) site is built by H64, H66, D68, H69, H141, D209, and H267. Residue D68 is the Proton acceptor of the active site.

It belongs to the RNase Z family. As to quaternary structure, homodimer. Requires Zn(2+) as cofactor.

The enzyme catalyses Endonucleolytic cleavage of RNA, removing extra 3' nucleotides from tRNA precursor, generating 3' termini of tRNAs. A 3'-hydroxy group is left at the tRNA terminus and a 5'-phosphoryl group is left at the trailer molecule.. Functionally, zinc phosphodiesterase, which displays some tRNA 3'-processing endonuclease activity. Probably involved in tRNA maturation, by removing a 3'-trailer from precursor tRNA. This chain is Ribonuclease Z, found in Picrophilus torridus (strain ATCC 700027 / DSM 9790 / JCM 10055 / NBRC 100828 / KAW 2/3).